Here is a 307-residue protein sequence, read N- to C-terminus: UDP-N-acetylenolpyruvoylglucosamine reductase (307 aa).

The FAD-binding PCMH-type domain occupies 33-197 (TGGNADFYIT…LEAAFTLAPG (165 aa)). The active site involves Arg-176. Ser-226 acts as the Proton donor in catalysis. Residue Glu-296 is part of the active site.

Belongs to the MurB family. The cofactor is FAD.

The protein localises to the cytoplasm. The enzyme catalyses UDP-N-acetyl-alpha-D-muramate + NADP(+) = UDP-N-acetyl-3-O-(1-carboxyvinyl)-alpha-D-glucosamine + NADPH + H(+). It functions in the pathway cell wall biogenesis; peptidoglycan biosynthesis. In terms of biological role, cell wall formation. This chain is UDP-N-acetylenolpyruvoylglucosamine reductase, found in Staphylococcus aureus (strain COL).